A 277-amino-acid polypeptide reads, in one-letter code: Phosphate import ATP-binding protein PstB 2 (277 aa).

The region spanning 31 to 272 (IEVPGLSLFY…PAKKQTEDYI (242 aa)) is the ABC transporter domain. 63–70 (GPSGCGKS) contacts ATP.

This sequence belongs to the ABC transporter superfamily. Phosphate importer (TC 3.A.1.7) family. In terms of assembly, the complex is composed of two ATP-binding proteins (PstB), two transmembrane proteins (PstC and PstA) and a solute-binding protein (PstS).

Its subcellular location is the cell inner membrane. The catalysed reaction is phosphate(out) + ATP + H2O = ADP + 2 phosphate(in) + H(+). In terms of biological role, part of the ABC transporter complex PstSACB involved in phosphate import. Responsible for energy coupling to the transport system. The polypeptide is Phosphate import ATP-binding protein PstB 2 (Pseudomonas putida (strain ATCC 47054 / DSM 6125 / CFBP 8728 / NCIMB 11950 / KT2440)).